A 289-amino-acid chain; its full sequence is ATP synthase gamma chain (289 aa).

Belongs to the ATPase gamma chain family. In terms of assembly, F-type ATPases have 2 components, CF(1) - the catalytic core - and CF(0) - the membrane proton channel. CF(1) has five subunits: alpha(3), beta(3), gamma(1), delta(1), epsilon(1). CF(0) has three main subunits: a, b and c.

It is found in the cell inner membrane. Produces ATP from ADP in the presence of a proton gradient across the membrane. The gamma chain is believed to be important in regulating ATPase activity and the flow of protons through the CF(0) complex. This Haemophilus influenzae (strain PittGG) protein is ATP synthase gamma chain.